We begin with the raw amino-acid sequence, 184 residues long: Peptidoglycan-recognition protein SC2 (184 aa).

An N-terminal signal peptide occupies residues 1 to 20 (MANKALILLAVLFCAQAVLG). Residues 45–169 (SYAVIHHTAG…RQVGSTECPG (125 aa)) enclose the N-acetylmuramoyl-L-alanine amidase domain. His50 is a binding site for Zn(2+). A disulfide bridge connects residues Cys57 and Cys63. Zn(2+) is bound by residues His159 and Cys167.

Belongs to the N-acetylmuramoyl-L-alanine amidase 2 family. It depends on Zn(2+) as a cofactor. As to expression, constitutively expressed at high level in gut, in addition to the induced expression in fat body.

It is found in the secreted. It catalyses the reaction Hydrolyzes the link between N-acetylmuramoyl residues and L-amino acid residues in certain cell-wall glycopeptides.. In terms of biological role, N-acetylmuramyl-L-alanine amidase involved in innate immunity by degrading bacterial peptidoglycans (PGN). Probably plays a scavenger role by digesting biologically active PGN into biologically inactive fragments. Has no direct bacteriolytic activity. The polypeptide is Peptidoglycan-recognition protein SC2 (PGRP-SC2) (Drosophila melanogaster (Fruit fly)).